The sequence spans 523 residues: Cytochrome P450 monooxygenase bsc5 (523 aa).

Residues Met16–Pro36 traverse the membrane as a helical segment. Residues Asn178, Asn281, and Asn403 are each glycosylated (N-linked (GlcNAc...) asparagine). Cys459 is a binding site for heme.

It belongs to the cytochrome P450 family. Requires heme as cofactor.

Its subcellular location is the membrane. Its pathway is mycotoxin biosynthesis. Functionally, cytochrome P450 monooxygenase; part of the gene cluster that mediates the biosynthesis of the diterpene glucoside brassicicene C. In the first step of the brassicicene C biosynthesis, the bifunctional diterpene synthase bsc8 that possesses both prenyl transferase and terpene cyclase activity, converts isopentenyl diphosphate and dimethylallyl diphosphate into geranylgeranyl diphosphate (GGDP) that is further converted into fusicocca-2,10(14)-diene, the first precursor for brassicicene C. Fusicocca-2,10(14)-diene is then substrate of cytochrome P450 monooxygenase bsc1 for hydroxylation at the C-8 position. Oxidation at C-16 position to aldehyde is then catalyzed by the cytochrome P450 monooyxygenase bsc7, yielding fusicocca-2,10(14)-diene-8-beta,16-diol. Follows the isomerization of the double bond and reduction of aldehyde to alcohol catalyzed by the short-chain dehydrogenase/reductase bsc3 to yield the diol compound fusicocca-1,10(14)-diene-8 beta,16-diol. The next step is the oxidation at the C-3 position of fusicocca-2,10(14)-diene-8-beta,16-diol catalyzed by the alpha-ketoglutarate dependent dioxygenase bsc9, to produce a triol compound. Methylation of the hydroxy group at position 16 is performed by the methyltransferase bsc6. 16-O-methylation is followed by oxidation at the C-13 position to ketone and an alkyl shift of the methyl group leads to brassicicene C. Although the probable acetyltransferase bsc4 is included in the gene cluster, no acetylation reactions are necessary for brassicicene C biosynthesis. However, the fact that brassicicene E, which is a structurally related compound having an acetoxy group at position 12, was previously isolated from another strain of A.brassicicola suggests that the ATCC 96836 strain might also produce a small amount of brassicicene E. The sequence is that of Cytochrome P450 monooxygenase bsc5 from Alternaria brassicicola (Dark leaf spot agent).